A 164-amino-acid polypeptide reads, in one-letter code: FMN reductase (NADH) RutF (164 aa).

It belongs to the non-flavoprotein flavin reductase family. RutF subfamily.

The enzyme catalyses FMNH2 + NAD(+) = FMN + NADH + 2 H(+). Functionally, catalyzes the reduction of FMN to FMNH2 which is used to reduce pyrimidine by RutA via the Rut pathway. This chain is FMN reductase (NADH) RutF, found in Shigella flexneri serotype X (strain 2002017).